A 212-amino-acid polypeptide reads, in one-letter code: 3-oxo-tetronate 4-phosphate decarboxylase (212 aa).

The active-site Proton acceptor is Glu-79. Glu-79, His-98, and His-100 together coordinate Zn(2+). Tyr-125 acts as the Proton donor in catalysis. His-165 provides a ligand contact to Zn(2+).

It belongs to the aldolase class II family. AraD/FucA subfamily. It depends on Zn(2+) as a cofactor.

The enzyme catalyses 3-dehydro-4-O-phospho-D-erythronate + H(+) = dihydroxyacetone phosphate + CO2. It catalyses the reaction 3-dehydro-4-O-phospho-L-erythronate + H(+) = dihydroxyacetone phosphate + CO2. Functionally, catalyzes the decarboxylation of 3-oxo-tetronate 4-phosphate to dihydroxyacetone phosphate (DHAP) and CO(2). This Escherichia coli O6:H1 (strain CFT073 / ATCC 700928 / UPEC) protein is 3-oxo-tetronate 4-phosphate decarboxylase.